Consider the following 285-residue polypeptide: NAD kinase (285 aa).

The active-site Proton acceptor is the aspartate 68. NAD(+)-binding positions include 68-69 (DG), 142-143 (ND), arginine 153, lysine 170, aspartate 172, and glutamine 242.

The protein belongs to the NAD kinase family. A divalent metal cation is required as a cofactor.

The protein localises to the cytoplasm. It catalyses the reaction NAD(+) + ATP = ADP + NADP(+) + H(+). Its function is as follows. Involved in the regulation of the intracellular balance of NAD and NADP, and is a key enzyme in the biosynthesis of NADP. Catalyzes specifically the phosphorylation on 2'-hydroxyl of the adenosine moiety of NAD to yield NADP. This chain is NAD kinase, found in Koribacter versatilis (strain Ellin345).